The sequence spans 229 residues: Prolactin (229 aa).

The signal sequence occupies residues 1-30; it reads MDKKRSSLKGSLLLLLLLVSDLLLCKSVAS. C34 and C41 are oxidised to a cystine. Phosphoserine is present on S56. N61 is a glycosylation site (N-linked (GlcNAc...) asparagine; partial). Phosphoserine is present on residues S64 and S120. 2 cysteine pairs are disulfide-bonded: C88–C204 and C221–C229.

This sequence belongs to the somatotropin/prolactin family. Interacts with PRLR.

Its subcellular location is the secreted. Functionally, prolactin acts primarily on the mammary gland by promoting lactation. The protein is Prolactin (PRL) of Equus caballus (Horse).